Consider the following 167-residue polypeptide: Myelin basic protein (167 aa).

Ala1 is subject to N-acetylalanine. Phosphoserine occurs at positions 7 and 12. Tyr14 is modified (phosphotyrosine). A Phosphothreonine modification is found at Thr17. Ser19 is subject to Phosphoserine. Thr20 is subject to Phosphothreonine. 2 positions are modified to citrulline: Arg25 and Arg31. A Phosphothreonine modification is found at Thr35. The residue at position 40 (Ser40) is a Phosphoserine. Omega-N-methylarginine is present on residues Arg43 and Arg49. The interval 45-87 is induces experimental autoimmune encephalomyelitis (EAE) 1; sequence FGSDRAAPKRGSGKDSHHAARTTHYGSLPQKSQRSQDENPVVH. The segment at 46 to 114 is disordered; that stretch reads GSDRAAPKRG…GRGLSLSRFS (69 aa). A Phosphoserine modification is found at Ser56. Phosphothreonine is present on Thr67. The residue at position 69 (Tyr69) is a Phosphotyrosine. Ser76 is modified (phosphoserine). Residues Thr94 and Thr97 each carry the phosphothreonine modification. Gln102 bears the Deamidated glutamine mark. An Omega-N-methylarginine; alternate modification is found at Arg106. Arg106 bears the Symmetric dimethylarginine; alternate mark. At Ser114 the chain carries Phosphoserine. Residues 114–122 form an induces experimental autoimmune encephalomyelitis (EAE) 2 region; that stretch reads SWGAEGQKP. Lys121 is subject to N6-acetyllysine. Arg129 is modified (citrulline). Residues 136 to 167 form a disordered region; it reads GFKGAHDAQGTLSKIFKLGGRDSRSGSPMARR. Gln144 is subject to Deamidated glutamine. Arg156 carries the post-translational modification Citrulline. Ser158 bears the Phosphoserine mark. Residue Ser162 is modified to Phosphoserine; by UHMK1. Residue Arg167 is modified to Citrulline.

The protein belongs to the myelin basic protein family. In terms of assembly, homodimer. At least 5 charge isomers; C1 (the most cationic, least modified, and most abundant form), C2, C3, C4 and C5 (the least cationic form); are produced as a result of optional post-translational modifications such as phosphorylation of serine or threonine residues, deamidation of glutamine or asparagine residues, citrullination and methylation of arginine residues. C1 and C2 are unphosphorylated, C3 and C4 are monophosphorylated and C5 is phosphorylated at two positions. Post-translationally, phosphorylated by TAOK2, VRK2, MAPK11, MAPK12, MAPK14 and MINK1. In terms of processing, proteolytically cleaved in B cell lysosomes by cathepsin CTSG which degrades the major immunogenic MBP epitope and prevents the activation of MBP-specific autoreactive T cells. As to expression, found in both the central and the peripheral nervous system.

It localises to the myelin membrane. In terms of biological role, is, with PLP, the most abundant protein component of the myelin membrane in the CNS. Has a role in both the formation and stabilization of this compact multilayer arrangement of bilayers. Each splice variant and charge isomer may have a specialized function in the assembly of an optimized, biochemically functional myelin membrane. In Cavia porcellus (Guinea pig), this protein is Myelin basic protein (MBP).